The chain runs to 1697 residues: UDP-sugar-dependent glycosyltransferase 52 (1697 aa).

Disordered regions lie at residues H20–N40 and S142–P166. In terms of domain architecture, PH spans D234–K332. Disordered regions lie at residues F573–E645 and P707–Q756. Low complexity-rich tracts occupy residues Q584–A628 and Q711–Q722. 2 consecutive GRAM domains span residues S658–R793 and I881–S948. Acidic residues predominate over residues T739–F749. Disordered regions lie at residues S1011–T1047, D1062–F1085, S1110–T1130, and E1466–S1488. Composition is skewed to low complexity over residues P1026 to T1047, N1065 to S1084, Q1112 to T1130, and N1469 to N1479. The FYVE-type zinc-finger motif lies at S1622–Q1685. Zn(2+)-binding residues include C1628, C1631, C1647, C1650, C1655, C1658, C1677, and C1680.

This sequence belongs to the glycosyltransferase 28 family.

The enzyme catalyses a sterol + UDP-alpha-D-glucose = a sterol 3-beta-D-glucoside + UDP + H(+). Its function is as follows. Involved in the biosynthesis of sterol glucoside. Can use different sterols such as cholesterol, sitosterol, and ergosterol as sugar acceptors. The protein is UDP-sugar-dependent glycosyltransferase 52 (ugt52) of Dictyostelium discoideum (Social amoeba).